A 555-amino-acid chain; its full sequence is MTRYIFITGGVVSSLGKGITSASLGAILEAQGLTVTLLKLDPYINVDPGTMSPFQHGEVFVTEDGAETDLDLGHYERFVNATMTRKNNFTTGRVYADVIRKERRGDYLGGTIQVIPHITDEIKAKIREGADGADVALVEVGGTVGDIESLPFLEAIRQMRIELGDQQTLFIHLTLVPYVAVAGEIKTKPTQHSVKELRSIGIQPDILVCRSEQPLPDAERAKIALFTNVPEPSVISLSDVKSIYEIPLILRDQGLGNRVCEKLNIKATAADLDDWKKVVQAQKNPRHTVTVAVVGKYVDLEDSYKSLSEALIHAGIHTQTRVVIEYIDSEAIELHGTELLKKVDAILVPGGFGSRGIEGKILAAQYARENGIPYFGICLGMQIAIIEFARDKAQMENANSTEFDPKTPFPVVALVSEWMAKEGIIEKRKWGDDLGGTMRLGGQPCRLKIDSLARRLYGEDRVIERHRHRYEVNNDLIGELEKKGLVISGRSIDDRLVEMIELADHPWFVGCQFHPEFTSTPRKGHPLFIGFIKAGLAAKEAKKAVLAAPSQEKTD.

Residues 1 to 265 (MTRYIFITGG…GNRVCEKLNI (265 aa)) form an amidoligase domain region. Ser-13 provides a ligand contact to CTP. UTP is bound at residue Ser-13. ATP contacts are provided by residues 14 to 19 (SLGKGI) and Asp-71. Asp-71 and Glu-139 together coordinate Mg(2+). CTP is bound by residues 146–148 (DIE), 186–191 (KTKPTQ), and Lys-222. UTP is bound by residues 186–191 (KTKPTQ) and Lys-222. Residues 290-541 (TVAVVGKYVD…IKAGLAAKEA (252 aa)) enclose the Glutamine amidotransferase type-1 domain. Gly-351 is an L-glutamine binding site. The active-site Nucleophile; for glutamine hydrolysis is Cys-378. L-glutamine contacts are provided by residues 379-382 (LGMQ), Glu-402, and Arg-469. Residues His-514 and Glu-516 contribute to the active site.

It belongs to the CTP synthase family. As to quaternary structure, homotetramer.

The catalysed reaction is UTP + L-glutamine + ATP + H2O = CTP + L-glutamate + ADP + phosphate + 2 H(+). The enzyme catalyses L-glutamine + H2O = L-glutamate + NH4(+). It catalyses the reaction UTP + NH4(+) + ATP = CTP + ADP + phosphate + 2 H(+). It functions in the pathway pyrimidine metabolism; CTP biosynthesis via de novo pathway; CTP from UDP: step 2/2. Allosterically activated by GTP, when glutamine is the substrate; GTP has no effect on the reaction when ammonia is the substrate. The allosteric effector GTP functions by stabilizing the protein conformation that binds the tetrahedral intermediate(s) formed during glutamine hydrolysis. Inhibited by the product CTP, via allosteric rather than competitive inhibition. In terms of biological role, catalyzes the ATP-dependent amination of UTP to CTP with either L-glutamine or ammonia as the source of nitrogen. Regulates intracellular CTP levels through interactions with the four ribonucleotide triphosphates. This Coxiella burnetii (strain RSA 493 / Nine Mile phase I) protein is CTP synthase.